The sequence spans 66 residues: Beta-toxin Cbo4 (66 aa).

Positions 1 to 66 constitute an LCN-type CS-alpha/beta domain; that stretch reads KEGYIVDYHT…VWPLPNKRCK (66 aa). Cystine bridges form between Cys12–Cys65, Cys16–Cys41, Cys25–Cys46, and Cys29–Cys48. Residue Lys66 is modified to Lysine amide.

This sequence belongs to the long (4 C-C) scorpion toxin superfamily. Sodium channel inhibitor family. Beta subfamily. In terms of tissue distribution, expressed by the venom gland.

It localises to the secreted. Functionally, beta toxins bind voltage-independently at site-4 of sodium channels and shift the voltage of activation toward more negative potentials thereby affecting sodium channel activation and promoting spontaneous and repetitive firing. Is active on the human voltage-gated sodium channels Nav1.4/SCN4A, Nav1.5/SCN5A and Nav1.6/SCN8A when tested at 200 nM. In vivo, is toxic to mice when intraperitoneally injected. The sequence is that of Beta-toxin Cbo4 from Centruroides bonito (Scorpion).